An 840-amino-acid chain; its full sequence is V-type proton ATPase subunit a, vacuolar isoform (840 aa).

Ala-2 carries the N-acetylalanine modification. Topologically, residues 2 to 404 are cytoplasmic; it reads AEKEEAIFRS…DCYGIAQYRE (403 aa). The stretch at 117–145 forms a coiled coil; sequence LEERLIQMEDATDQIEVQKNDLEQYRFIL. The helical transmembrane segment at 405 to 423 threads the bilayer; that stretch reads INAGLPTIVTFPFMFAIMF. The Vacuolar segment spans residues 424–425; the sequence is GD. A helical membrane pass occupies residues 426–442; sequence MGHGFLMTLAALSLVLN. Over 443–456 the chain is Cytoplasmic; it reads EKKINKMKRGEIFD. A helical transmembrane segment spans residues 457–486; the sequence is MAFTGRYIILLMGVFSMYTGFLYNDIFSKT. Over 487-534 the chain is Vacuolar; the sequence is MTIFKSGWKWPDHWKKGESITATSVGTYPIGLDWAWHGTENALLFSNS. Residues 535–554 form a helical membrane-spanning segment; sequence YKMKLSILMGFIHMTYSYFF. Topologically, residues 555-572 are cytoplasmic; the sequence is SLANHLYFNSMIDIIGNF. The chain crosses the membrane as a helical span at residues 573–593; it reads IPGLLFMQGIFGYLSVCIVYK. The Vacuolar segment spans residues 594–636; it reads WAVDWVKDGKPAPGLLNMLINMFLSPGTIDDELYPHQAKVQVF. Residues 637 to 656 form a helical membrane-spanning segment; it reads LLLMALVCIPWLLLVKPLHF. The Cytoplasmic segment spans residues 657-719; the sequence is KFTHKKKSHE…DIMIHQVIHT (63 aa). Residues 720–744 traverse the membrane as a helical segment; the sequence is IEFCLNCVSHTASYLRLWALSLAHA. Topologically, residues 745–765 are vacuolar; that stretch reads QLSSVLWTMTIQIAFGFRGFV. A helical membrane pass occupies residues 766–804; the sequence is GVFMTVALFAMWFALTCAVLVLMEGTSAMLHSLRLHWVE. Residues 805–840 are Cytoplasmic-facing; sequence SMSKFFVGEGLPYEPFAFEYKDMEVAVASASSSASS.

It belongs to the V-ATPase 116 kDa subunit family. V-ATPase is a heteromultimeric enzyme composed of a peripheral catalytic V1 complex (components A to H) attached to an integral membrane V0 proton pore complex (components: a, c, c', c'', d, e, f and VOA1). In terms of processing, glycosylated.

It localises to the vacuole membrane. Subunit of the V0 complex of vacuolar(H+)-ATPase (V-ATPase), a multisubunit enzyme composed of a peripheral complex (V1) that hydrolyzes ATP and a membrane integral complex (V0) that translocates protons. V-ATPase is responsible for acidifying and maintaining the pH of intracellular compartments. Is present only in vacuolar V-ATPase complexes; enzymes containing this subunit have a 4-fold higher ratio of proton transport to ATP hydrolysis than complexes containing the Golgi/endosomal isoform and undergo reversible dissociation of V1 and V0 in response to glucose depletion. The chain is V-type proton ATPase subunit a, vacuolar isoform from Saccharomyces cerevisiae (strain ATCC 204508 / S288c) (Baker's yeast).